A 354-amino-acid polypeptide reads, in one-letter code: Uroporphyrinogen decarboxylase (354 aa).

Substrate-binding positions include 30–34, aspartate 79, tyrosine 154, serine 209, and histidine 333; that span reads RQAGR.

This sequence belongs to the uroporphyrinogen decarboxylase family. As to quaternary structure, homodimer.

Its subcellular location is the cytoplasm. It carries out the reaction uroporphyrinogen III + 4 H(+) = coproporphyrinogen III + 4 CO2. Its pathway is porphyrin-containing compound metabolism; protoporphyrin-IX biosynthesis; coproporphyrinogen-III from 5-aminolevulinate: step 4/4. In terms of biological role, catalyzes the decarboxylation of four acetate groups of uroporphyrinogen-III to yield coproporphyrinogen-III. The sequence is that of Uroporphyrinogen decarboxylase from Mycobacterium sp. (strain JLS).